The following is a 95-amino-acid chain: Co-chaperonin GroES (95 aa).

Belongs to the GroES chaperonin family. Heptamer of 7 subunits arranged in a ring. Interacts with the chaperonin GroEL.

The protein resides in the cytoplasm. Functionally, together with the chaperonin GroEL, plays an essential role in assisting protein folding. The GroEL-GroES system forms a nano-cage that allows encapsulation of the non-native substrate proteins and provides a physical environment optimized to promote and accelerate protein folding. GroES binds to the apical surface of the GroEL ring, thereby capping the opening of the GroEL channel. In Alkalilimnicola ehrlichii (strain ATCC BAA-1101 / DSM 17681 / MLHE-1), this protein is Co-chaperonin GroES.